Here is a 269-residue protein sequence, read N- to C-terminus: Eukaryotic translation initiation factor 3 subunit G-1 (269 aa).

The RRM domain occupies 188 to 266 (AAIRISNLSE…LILSVEWSKP (79 aa)).

Belongs to the eIF-3 subunit G family. Component of the eukaryotic translation initiation factor 3 (eIF-3) complex. The eIF-3 complex interacts with pix.

The protein resides in the cytoplasm. RNA-binding component of the eukaryotic translation initiation factor 3 (eIF-3) complex, which is involved in protein synthesis of a specialized repertoire of mRNAs and, together with other initiation factors, stimulates binding of mRNA and methionyl-tRNAi to the 40S ribosome. The eIF-3 complex specifically targets and initiates translation of a subset of mRNAs involved in cell proliferation. This subunit can bind 18S rRNA. This Drosophila persimilis (Fruit fly) protein is Eukaryotic translation initiation factor 3 subunit G-1.